A 538-amino-acid polypeptide reads, in one-letter code: Probable cytochrome P450 309a2 (538 aa).

Residue C483 participates in heme binding.

This sequence belongs to the cytochrome P450 family. Heme is required as a cofactor.

The protein localises to the endoplasmic reticulum membrane. It localises to the microsome membrane. Functionally, may be involved in the metabolism of insect hormones and in the breakdown of synthetic insecticides. This is Probable cytochrome P450 309a2 (Cyp309a2) from Drosophila melanogaster (Fruit fly).